A 110-amino-acid chain; its full sequence is Ribonuclease P protein component (110 aa).

Belongs to the RnpA family. As to quaternary structure, consists of a catalytic RNA component (M1 or rnpB) and a protein subunit.

It catalyses the reaction Endonucleolytic cleavage of RNA, removing 5'-extranucleotides from tRNA precursor.. RNaseP catalyzes the removal of the 5'-leader sequence from pre-tRNA to produce the mature 5'-terminus. It can also cleave other RNA substrates such as 4.5S RNA. The protein component plays an auxiliary but essential role in vivo by binding to the 5'-leader sequence and broadening the substrate specificity of the ribozyme. This is Ribonuclease P protein component from Mesoplasma florum (strain ATCC 33453 / NBRC 100688 / NCTC 11704 / L1) (Acholeplasma florum).